A 285-amino-acid polypeptide reads, in one-letter code: MATYAVGDLQGCLQPLKCLLERAHFNPAVDRLWLVGDLVNRGPESLETLRYLYSIRDSLVCVLGNHDLHLLAAWHNVERLKKSDTLREIIEAPDADQLFDWLRRQKLLHYDEPRGIAMVHAGIPPQWTLGKALELAAEVEEVLRDDGRLKLYLDGMYGNEPNKWSKDLAGVERLRVITNYFTRMRFCTATGKLDLKSKEGLESAPKGYKPWFDHPDRRSRHVKIIFGHWAALEGRVDVPGVIALDTGCVWGGAMTLYNVDSGEYHRCDCTREGTPRPAALNNDQP.

Belongs to the Ap4A hydrolase family.

The catalysed reaction is P(1),P(4)-bis(5'-adenosyl) tetraphosphate + H2O = 2 ADP + 2 H(+). Its function is as follows. Hydrolyzes diadenosine 5',5'''-P1,P4-tetraphosphate to yield ADP. This chain is Bis(5'-nucleosyl)-tetraphosphatase, symmetrical, found in Pseudomonas entomophila (strain L48).